Here is a 502-residue protein sequence, read N- to C-terminus: SCRSYRISPGYSVTRTFSSCSAVAPKTGSRCCISAAPYRGVSCYRGLTGFGSRSVSALGSCGPRIAVSGFRAGSCGRSFGYRSGGVGGLSPSCITTVSVNESLLTPLNLEIDPNAQCVKHQEKEQIKNLNSRFAAFIDKVRFLEQQNKLLETKWQFYQNQRCCESNLEPLFNGYIETLRREAEHVEADSGRLASELDHVQEVLEGYKKKYEEEVALRATAENEFVVLKKDVDCAYLRKSDLEANVEALVEESNFLKRLYDEEIQILNAHISDTSVIVKMDNSRDLNMDCVVAEIKAQYDDIASRSRAEAESWYRSKCEEMKATVIRHGETLRRTKEEINELNRVIQRLTAEIENAKCQRTKLEAAVAEAEQQGEAALNDARSKLAGLEEALQKAKQDMACLLKEYQEVMNSKLGLDIEIATYRRLLEGEEQRLCEGVGSVNVCVSSRGGVACGGLTYSSTAGRQIASGPVATGGSITVLAPDSCQPRASSFSCGSSRSVRFA.

The residue at position 1 (serine 1) is a Blocked amino end (Ser). The head stretch occupies residues 1–122 (SCRSYRISPG…PNAQCVKHQE (122 aa)). Residues 122 to 433 (EKEQIKNLNS…RLLEGEEQRL (312 aa)) form the IF rod domain. A coil 1A region spans residues 123 to 157 (KEQIKNLNSRFAAFIDKVRFLEQQNKLLETKWQFY). The linker 1 stretch occupies residues 158 to 167 (QNQRCCESNL). The coil 1B stretch occupies residues 168-268 (EPLFNGYIET…YDEEIQILNA (101 aa)). Lysine 228 participates in a covalent cross-link: Glycyl lysine isopeptide (Lys-Gly) (interchain with G-Cter in SUMO1). The tract at residues 269–285 (HISDTSVIVKMDNSRDL) is linker 12. The coil 2 stretch occupies residues 286–429 (NMDCVVAEIK…ATYRRLLEGE (144 aa)). The tail stretch occupies residues 430–502 (EQRLCEGVGS…CGSSRSVRFA (73 aa)).

This sequence belongs to the intermediate filament family. In terms of tissue distribution, hard keratin wool.

In terms of biological role, wool microfibrillar keratin. The chain is Keratin, type II microfibrillar, component 5 from Ovis aries (Sheep).